Reading from the N-terminus, the 266-residue chain is Potassium/proton antiporter CemA (266 aa).

A run of 3 helical transmembrane segments spans residues 46–66 (VIVS…INIL), 151–171 (FLSF…IIIL), and 226–246 (FMSL…KYWI).

It belongs to the CemA family.

It is found in the plastid. Its subcellular location is the chloroplast inner membrane. It carries out the reaction K(+)(in) + H(+)(out) = K(+)(out) + H(+)(in). Contributes to K(+)/H(+) antiport activity by supporting proton efflux to control proton extrusion and homeostasis in chloroplasts in a light-dependent manner to modulate photosynthesis. Prevents excessive induction of non-photochemical quenching (NPQ) under continuous-light conditions. Indirectly promotes efficient inorganic carbon uptake into chloroplasts. The protein is Potassium/proton antiporter CemA of Chlorella vulgaris (Green alga).